The following is a 134-amino-acid chain: Ribosome-binding factor A (134 aa).

The protein belongs to the RbfA family. As to quaternary structure, monomer. Binds 30S ribosomal subunits, but not 50S ribosomal subunits or 70S ribosomes.

It localises to the cytoplasm. In terms of biological role, one of several proteins that assist in the late maturation steps of the functional core of the 30S ribosomal subunit. Associates with free 30S ribosomal subunits (but not with 30S subunits that are part of 70S ribosomes or polysomes). Required for efficient processing of 16S rRNA. May interact with the 5'-terminal helix region of 16S rRNA. This Rhizobium etli (strain CIAT 652) protein is Ribosome-binding factor A.